Consider the following 785-residue polypeptide: Phenylalanine--tRNA ligase beta subunit (785 aa).

Positions 39–147 constitute a tRNA-binding domain; the sequence is FPIPRGVVFA…DALPPGTPLS (109 aa). Residues 399 to 474 form the B5 domain; that stretch reads KPPEAIPFRP…RIQGYETIPL (76 aa). Positions 452, 458, 461, and 462 each coordinate Mg(2+). One can recognise an FDX-ACB domain in the interval 688-780; sequence SRHPAAFRDL…ALRARGFGLR (93 aa).

It belongs to the phenylalanyl-tRNA synthetase beta subunit family. Type 1 subfamily. As to quaternary structure, tetramer of two alpha and two beta subunits. Requires Mg(2+) as cofactor.

Its subcellular location is the cytoplasm. The catalysed reaction is tRNA(Phe) + L-phenylalanine + ATP = L-phenylalanyl-tRNA(Phe) + AMP + diphosphate + H(+). This chain is Phenylalanine--tRNA ligase beta subunit (pheT), found in Thermus thermophilus (strain ATCC 27634 / DSM 579 / HB8).